The sequence spans 575 residues: Dihydroxy-acid dehydratase (575 aa).

The segment at 1 to 25 (MPTTDSARAADIKQPDIKPRSRDVT) is disordered. Residues 8–25 (RAADIKQPDIKPRSRDVT) show a composition bias toward basic and acidic residues. [2Fe-2S] cluster is bound at residue Cys64. Asp96 is a Mg(2+) binding site. Cys137 contributes to the [2Fe-2S] cluster binding site. Mg(2+)-binding residues include Asp138 and Lys139. An N6-carboxylysine modification is found at Lys139. Position 214 (Cys214) interacts with [2Fe-2S] cluster. Glu465 lines the Mg(2+) pocket. Ser491 functions as the Proton acceptor in the catalytic mechanism.

Belongs to the IlvD/Edd family. As to quaternary structure, homodimer. Requires [2Fe-2S] cluster as cofactor. Mg(2+) is required as a cofactor.

It carries out the reaction (2R)-2,3-dihydroxy-3-methylbutanoate = 3-methyl-2-oxobutanoate + H2O. The enzyme catalyses (2R,3R)-2,3-dihydroxy-3-methylpentanoate = (S)-3-methyl-2-oxopentanoate + H2O. The protein operates within amino-acid biosynthesis; L-isoleucine biosynthesis; L-isoleucine from 2-oxobutanoate: step 3/4. It participates in amino-acid biosynthesis; L-valine biosynthesis; L-valine from pyruvate: step 3/4. Its function is as follows. Functions in the biosynthesis of branched-chain amino acids. Catalyzes the dehydration of (2R,3R)-2,3-dihydroxy-3-methylpentanoate (2,3-dihydroxy-3-methylvalerate) into 2-oxo-3-methylpentanoate (2-oxo-3-methylvalerate) and of (2R)-2,3-dihydroxy-3-methylbutanoate (2,3-dihydroxyisovalerate) into 2-oxo-3-methylbutanoate (2-oxoisovalerate), the penultimate precursor to L-isoleucine and L-valine, respectively. The protein is Dihydroxy-acid dehydratase of Mycobacterium avium (strain 104).